Consider the following 692-residue polypeptide: Vitamin B12-dependent ribonucleoside-diphosphate reductase (692 aa).

The 89-residue stretch at 7–95 (AKVRRRDGTL…IYRQRRAELR (89 aa)) folds into the ATP-cone domain. Substrate-binding positions include S177, 192–193 (GC), G221, 375–379 (NPCGE), and 520–524 (PTGTI). Cysteines 193 and 388 form a disulfide. N375 functions as the Proton acceptor in the catalytic mechanism. The Cysteine radical intermediate role is filled by C377. E379 functions as the Proton acceptor in the catalytic mechanism.

This sequence belongs to the ribonucleoside diphosphate reductase class-2 family. Requires adenosylcob(III)alamin as cofactor.

It carries out the reaction a 2'-deoxyribonucleoside 5'-diphosphate + [thioredoxin]-disulfide + H2O = a ribonucleoside 5'-diphosphate + [thioredoxin]-dithiol. Functionally, provides the precursors necessary for DNA synthesis. Catalyzes the biosynthesis of deoxyribonucleotides from the corresponding ribonucleotides. In Mycobacterium tuberculosis (strain CDC 1551 / Oshkosh), this protein is Vitamin B12-dependent ribonucleoside-diphosphate reductase (nrdZ).